The chain runs to 274 residues: Diaminopimelate epimerase (274 aa).

Substrate contacts are provided by asparagine 11, glutamine 44, and asparagine 64. Cysteine 73 serves as the catalytic Proton donor. Substrate-binding positions include 74–75 (GN), asparagine 157, asparagine 190, and 208–209 (ER). Cysteine 217 (proton acceptor) is an active-site residue. 218–219 (GS) contributes to the substrate binding site.

Belongs to the diaminopimelate epimerase family. Homodimer.

The protein localises to the cytoplasm. It catalyses the reaction (2S,6S)-2,6-diaminopimelate = meso-2,6-diaminopimelate. It functions in the pathway amino-acid biosynthesis; L-lysine biosynthesis via DAP pathway; DL-2,6-diaminopimelate from LL-2,6-diaminopimelate: step 1/1. Functionally, catalyzes the stereoinversion of LL-2,6-diaminopimelate (L,L-DAP) to meso-diaminopimelate (meso-DAP), a precursor of L-lysine and an essential component of the bacterial peptidoglycan. The chain is Diaminopimelate epimerase from Histophilus somni (strain 129Pt) (Haemophilus somnus).